Consider the following 305-residue polypeptide: Non-homologous end joining protein Ku (305 aa).

The region spanning 16-202 is the Ku domain; it reads SLVSFGISLI…KVDPEQLSLA (187 aa). The interval 263–305 is disordered; the sequence is GEENGRKKSVSGAQHRSRRKSKGEQKLKVVRSGSSSDKRRKSA.

The protein belongs to the prokaryotic Ku family. As to quaternary structure, homodimer. Interacts with LigD.

Functionally, with LigD forms a non-homologous end joining (NHEJ) DNA repair enzyme, which repairs dsDNA breaks with reduced fidelity. Binds linear dsDNA with 5'- and 3'- overhangs but not closed circular dsDNA nor ssDNA. Recruits and stimulates the ligase activity of LigD. This Acidobacterium capsulatum (strain ATCC 51196 / DSM 11244 / BCRC 80197 / JCM 7670 / NBRC 15755 / NCIMB 13165 / 161) protein is Non-homologous end joining protein Ku.